Consider the following 240-residue polypeptide: Oxygen-insensitive NADPH nitroreductase (240 aa).

Residues 11-15 (HRSIR), S39, Q67, 128-131 (YIGG), and 167-169 (KPR) each bind FMN.

The protein belongs to the flavin oxidoreductase frp family. Homodimer. Requires FMN as cofactor.

Its function is as follows. Catalyzes the reduction of nitroaromatic compounds using NADPH. Has a broad electron acceptor specificity. Reduces nitrofurazone by a ping-pong bi-bi mechanism possibly to generate a two-electron transfer product. This Salmonella typhimurium (strain LT2 / SGSC1412 / ATCC 700720) protein is Oxygen-insensitive NADPH nitroreductase (nfsA).